The chain runs to 217 residues: Protein DJ-1alpha (217 aa).

Cysteine 133 acts as the Nucleophile in catalysis. At cysteine 133 the chain carries Cysteine sulfinic acid (-SO2H); alternate.

As to expression, expressed in testis (at protein level).

It localises to the cytoplasm. Its subcellular location is the nucleus. The protein resides in the mitochondrion. Its function is as follows. Plays an important role in cell protection against oxidative stress and cell death acting as oxidative stress sensor. Does not play a role in methylglyoxal detoxification. This is Protein DJ-1alpha from Drosophila melanogaster (Fruit fly).